A 640-amino-acid polypeptide reads, in one-letter code: Chaperone protein DnaK (640 aa).

T199 carries the post-translational modification Phosphothreonine; by autocatalysis. The disordered stretch occupies residues 603–640 (YTQQAEEPQPQKEEGKAAEEDVVDAEFEEVKEDKNKAS). Over residues 611 to 621 (QPQKEEGKAAE) the composition is skewed to basic and acidic residues. The span at 622–632 (EDVVDAEFEEV) shows a compositional bias: acidic residues.

This sequence belongs to the heat shock protein 70 family.

Acts as a chaperone. This chain is Chaperone protein DnaK, found in Nitrosococcus oceani (strain ATCC 19707 / BCRC 17464 / JCM 30415 / NCIMB 11848 / C-107).